The sequence spans 144 residues: D-aminoacyl-tRNA deacylase (144 aa).

The Gly-cisPro motif, important for rejection of L-amino acids signature appears at 136-137 (GP).

The protein belongs to the DTD family. In terms of assembly, homodimer.

The protein localises to the cytoplasm. The enzyme catalyses glycyl-tRNA(Ala) + H2O = tRNA(Ala) + glycine + H(+). The catalysed reaction is a D-aminoacyl-tRNA + H2O = a tRNA + a D-alpha-amino acid + H(+). Its function is as follows. An aminoacyl-tRNA editing enzyme that deacylates mischarged D-aminoacyl-tRNAs. Also deacylates mischarged glycyl-tRNA(Ala), protecting cells against glycine mischarging by AlaRS. Acts via tRNA-based rather than protein-based catalysis; rejects L-amino acids rather than detecting D-amino acids in the active site. By recycling D-aminoacyl-tRNA to D-amino acids and free tRNA molecules, this enzyme counteracts the toxicity associated with the formation of D-aminoacyl-tRNA entities in vivo and helps enforce protein L-homochirality. The protein is D-aminoacyl-tRNA deacylase of Haemophilus ducreyi (strain 35000HP / ATCC 700724).